Reading from the N-terminus, the 122-residue chain is MKAERPDGRKLRALKRGHLAEYRAALCLIVKGYRIVAMRYRTKLGEIDIIARRGDLIACVEVKARASFDGAVFAVSDTAQRRIRAASDVWLSRQADFHCLSVRYDIVAVMPWRWPRHLPDAF.

It belongs to the UPF0102 family.

This is UPF0102 protein NGR_c36770 from Sinorhizobium fredii (strain NBRC 101917 / NGR234).